Reading from the N-terminus, the 60-residue chain is Mastoparan-V (60 aa).

Residues 1-27 form the signal peptide; sequence MKNTILILFTAFIALLGFFGMSAEALA. AXPX repeat units follow at residues 27–30, 31–34, 35–38, and 41–44; these read ADPV, ADPL, AGPN, and ADPE. Residues 28 to 45 constitute a propeptide that is removed on maturation; sequence DPVADPLAGPNAEADPEA. L59 carries the leucine amide modification.

It belongs to the MCD family. Mastoparan subfamily. In terms of tissue distribution, expressed by the venom gland.

Its subcellular location is the secreted. The protein resides in the target cell membrane. Functionally, antimicrobial and mast cell degranulating peptide. Has broad spectrum antibacterial activity against both Gram-positive and Gram-negative bacteria (S.aureus MIC=32-64 ug/ml, S.xylosus MIC=3 ug/ml, S.alactolyticus MIC=16 ug/ml, C.koseri MIC=4 ug/ml, E.coli MIC=8 ug/ml, K.pneumoniae MIC=64 ug/ml, P.aerugiosa MIC=256 ug/ml, S.choleraesuis MIC=32 ug/ml, S.typhimurium MIC=32 ug/ml, V.parahamelytics MIC=32 ug/ml). Affects membrane permeability of E.coli. Shows hemolytic activities on sheep, chicken and human erythrocytes. Its mast cell degranulation activity may be related to the activation of G-protein coupled receptors in mast cells as well as interaction with other proteins located in cell endosomal membranes in the mast cells. The polypeptide is Mastoparan-V (Vespa velutina flavitarsus (Asian hornet)).